The sequence spans 370 residues: Cytochrome b (370 aa).

The next 4 helical transmembrane spans lie at 30–50, 74–96, 109–129, and 175–195; these read FGSM…FLAF, WVFR…LHIF, VWMS…MGYV, and FFVL…GHLI. Positions 80 and 94 each coordinate heme b. Heme b contacts are provided by H179 and H193. H198 is a binding site for a ubiquinone. The next 4 helical transmembrane spans lie at 221-240, 284-304, 316-336, and 342-362; these read YLGK…VLSL, VLGV…ALVN, FLVF…QCTV, and ILSP…LFIF.

Belongs to the cytochrome b family. In terms of assembly, the main subunits of complex b-c1 are: cytochrome b, cytochrome c1 and the Rieske protein. It depends on heme b as a cofactor.

It is found in the mitochondrion inner membrane. Its function is as follows. Component of the ubiquinol-cytochrome c reductase complex (complex III or cytochrome b-c1 complex) that is part of the mitochondrial respiratory chain. The b-c1 complex mediates electron transfer from ubiquinol to cytochrome c. Contributes to the generation of a proton gradient across the mitochondrial membrane that is then used for ATP synthesis. The sequence is that of Cytochrome b from Caenorhabditis elegans.